The sequence spans 314 residues: tRNA pseudouridine synthase B (314 aa).

Histidine 43 is a substrate binding site. Catalysis depends on aspartate 48, which acts as the Nucleophile. Substrate contacts are provided by tyrosine 76, tyrosine 179, and leucine 200.

This sequence belongs to the pseudouridine synthase TruB family. Type 1 subfamily.

The catalysed reaction is uridine(55) in tRNA = pseudouridine(55) in tRNA. Responsible for synthesis of pseudouridine from uracil-55 in the psi GC loop of transfer RNAs. This chain is tRNA pseudouridine synthase B, found in Shigella boydii serotype 4 (strain Sb227).